We begin with the raw amino-acid sequence, 433 residues long: Eukaryotic peptide chain release factor subunit 1 (433 aa).

An N5-methylglutamine modification is found at Gln182. Ser425 is subject to Phosphoserine.

The protein belongs to the eukaryotic release factor 1 family. As to quaternary structure, component of the eRF1-eRF3-GTP ternary complex, composed of sup45/eRF1, sup35/eRF3 and GTP.

Its subcellular location is the cytoplasm. Functionally, component of the eRF1-eRF3-GTP ternary complex, a ternary complex that mediates translation termination in response to the termination codons. The eRF1-eRF3-GTP complex binds to a stop codon in the ribosomal A-site. Sup45/eRF1 is responsible for stop codon recognition and inducing hydrolysis of peptidyl-tRNA. Following GTP hydrolysis by sup35/eRF3, sup35/eRF3 dissociates, permitting sup45/eRF1 to accommodate fully in the A-site. The chain is Eukaryotic peptide chain release factor subunit 1 (sup45) from Schizosaccharomyces pombe (strain 972 / ATCC 24843) (Fission yeast).